Consider the following 168-residue polypeptide: CS3 fimbrial subunit A (168 aa).

Residues 1–22 (MLKIKYLLIGLSLSAMSSYSLA) form the signal peptide.

A longer minor form, starting at amino acid 15, has been detected by amino acid sequencing. This is probably due to alternative processing of the signal peptide.

Its subcellular location is the fimbrium. Fimbriae (also called pili), polar filaments radiating from the surface of the bacterium to a length of 0.5-1.5 micrometers and numbering 100-300 per cell, enable bacteria to colonize the epithelium of specific host organs. This is CS3 fimbrial subunit A from Escherichia coli.